A 411-amino-acid chain; its full sequence is Dual-specificity RNA methyltransferase RlmN (411 aa).

The active-site Proton acceptor is the glutamate 125. One can recognise a Radical SAM core domain in the interval 131-380 (EEGRGTLCIS…IRTPRGRDIL (250 aa)). Cysteine 138 and cysteine 383 form a disulfide bridge. [4Fe-4S] cluster is bound by residues cysteine 145, cysteine 149, and cysteine 152. S-adenosyl-L-methionine-binding positions include 209–210 (GE), serine 241, 263–265 (SLH), and asparagine 340. Cysteine 383 (S-methylcysteine intermediate) is an active-site residue.

The protein belongs to the radical SAM superfamily. RlmN family. The cofactor is [4Fe-4S] cluster.

The protein resides in the cytoplasm. It carries out the reaction adenosine(2503) in 23S rRNA + 2 reduced [2Fe-2S]-[ferredoxin] + 2 S-adenosyl-L-methionine = 2-methyladenosine(2503) in 23S rRNA + 5'-deoxyadenosine + L-methionine + 2 oxidized [2Fe-2S]-[ferredoxin] + S-adenosyl-L-homocysteine. The catalysed reaction is adenosine(37) in tRNA + 2 reduced [2Fe-2S]-[ferredoxin] + 2 S-adenosyl-L-methionine = 2-methyladenosine(37) in tRNA + 5'-deoxyadenosine + L-methionine + 2 oxidized [2Fe-2S]-[ferredoxin] + S-adenosyl-L-homocysteine. Its function is as follows. Specifically methylates position 2 of adenine 2503 in 23S rRNA and position 2 of adenine 37 in tRNAs. m2A2503 modification seems to play a crucial role in the proofreading step occurring at the peptidyl transferase center and thus would serve to optimize ribosomal fidelity. This chain is Dual-specificity RNA methyltransferase RlmN, found in Brucella canis (strain ATCC 23365 / NCTC 10854 / RM-666).